The primary structure comprises 312 residues: tRNA dimethylallyltransferase (312 aa).

10–17 is a binding site for ATP; it reads GPTGVGKT. 12–17 serves as a coordination point for substrate; that stretch reads TGVGKT.

This sequence belongs to the IPP transferase family. As to quaternary structure, monomer. The cofactor is Mg(2+).

It carries out the reaction adenosine(37) in tRNA + dimethylallyl diphosphate = N(6)-dimethylallyladenosine(37) in tRNA + diphosphate. Functionally, catalyzes the transfer of a dimethylallyl group onto the adenine at position 37 in tRNAs that read codons beginning with uridine, leading to the formation of N6-(dimethylallyl)adenosine (i(6)A). The protein is tRNA dimethylallyltransferase of Coprothermobacter proteolyticus (strain ATCC 35245 / DSM 5265 / OCM 4 / BT).